The chain runs to 37 residues: Large ribosomal subunit protein bL36 (37 aa).

The protein belongs to the bacterial ribosomal protein bL36 family.

In Mycobacterium ulcerans (strain Agy99), this protein is Large ribosomal subunit protein bL36.